Consider the following 512-residue polypeptide: Probable cobyric acid synthase (512 aa).

Residues 275–460 (SVTVAVPHLP…LHGLFGNDAA (186 aa)) enclose the GATase cobBQ-type domain. Cys-353 functions as the Nucleophile in the catalytic mechanism. His-452 is a catalytic residue.

Belongs to the CobB/CobQ family. CobQ subfamily.

Its pathway is cofactor biosynthesis; adenosylcobalamin biosynthesis. Catalyzes amidations at positions B, D, E, and G on adenosylcobyrinic A,C-diamide. NH(2) groups are provided by glutamine, and one molecule of ATP is hydrogenolyzed for each amidation. This is Probable cobyric acid synthase from Halobacterium salinarum (strain ATCC 29341 / DSM 671 / R1).